Consider the following 347-residue polypeptide: MLTKRQELILKTIIQDFTKTHEPVGSKTVMNQLSIKVSSATIRNEMAVLEEHGLIEKTHSSSGRVPSTEGYRYYLDNLVQPLQLPEEMYNQIGYQFDQPFNQVDEIVKEAARILSDLTDYTAFAEGPEDKNVSITGFRIVPLAPRQVMAILVISDGSVKNQLYTLPRHISGDEVEQAARLINDQLVGKNLSEINKQTFEQLYSSQIVGKNAPEFLELLESVIKDAASEQMYVDGQLNLLNNIENSDLKAIKSLYELINSSSLAGELIDLSDSPSHYPVHVRLGAELENDLLKDFSLVMAEYSVGRYGRGTIALLGPRHMPYSEMIGLMEYFRQELARKLLDYYGRFK.

The protein belongs to the HrcA family.

Functionally, negative regulator of class I heat shock genes (grpE-dnaK-dnaJ and groELS operons). Prevents heat-shock induction of these operons. The chain is Heat-inducible transcription repressor HrcA from Lactobacillus delbrueckii subsp. bulgaricus (strain ATCC BAA-365 / Lb-18).